Consider the following 174-residue polypeptide: Type II secretion system protein M (174 aa).

At 1-32 (MKVMTQFHERLRAQAETSQLAIRWRGLPARDR) the chain is on the cytoplasmic side. A helical transmembrane segment spans residues 33–52 (LALLWLGAFLLLVVLYLALW). At 53–174 (RPAERHLQSA…VSARLSLRVE (122 aa)) the chain is on the periplasmic side.

The protein belongs to the GSP M family. In terms of assembly, type II secretion system is composed of four main components: the outer membrane complex, the inner membrane complex, the cytoplasmic secretion ATPase and the periplasm-spanning pseudopilus. Forms homodimers. Interacts with XcpY/GspL. Interacts with XcpR/GspE and XcpS/GspF.

The protein resides in the cell inner membrane. Its function is as follows. Inner membrane component of the type II secretion system required for the energy-dependent secretion of extracellular factors such as proteases and toxins from the periplasm. Plays a role in the complex assembly and recruits XcpY resulting in a stable complex in the inner membrane. Provides thus a link between the energy-providing XcpR protein in the cytoplasm and the rest of the T2SS machinery. The chain is Type II secretion system protein M (xcpZ) from Pseudomonas aeruginosa (strain ATCC 15692 / DSM 22644 / CIP 104116 / JCM 14847 / LMG 12228 / 1C / PRS 101 / PAO1).